The sequence spans 337 residues: DnaJ homolog dnj-2 (337 aa).

Residues 4-24 traverse the membrane as a helical segment; sequence AIAAPILFLLVSFFVQECESV. Residues 36–105 enclose the J domain; that stretch reads NCYDVLEVNR…EAKTNYDYYL (70 aa). 2 helical membrane passes run 127-147 and 222-242; these read VDLR…QFLS and LAWH…WTAL. Positions 293–323 form a coiled coil; that stretch reads LKRNCATWKAERDAAEQEKMAQSGRYKRYKR.

The protein belongs to the DNAJC25 family.

The protein localises to the membrane. This Caenorhabditis elegans protein is DnaJ homolog dnj-2 (dnj-2).